The primary structure comprises 520 residues: Actin-related protein 4 (520 aa).

Residues 320-406 (PLKRTKPGTS…KATVPSNGIQ (87 aa)) form a disordered region. A compositionally biased stretch (polar residues) spans 339-361 (AESTPVPASTEQEAVDSPSQEPN). Basic and acidic residues predominate over residues 362 to 374 (ENGKRPVENKEDS). Residues 389–405 (ANSNESSAKATVPSNGI) are compositionally biased toward polar residues.

The protein belongs to the actin family. ARP4 subfamily. In terms of assembly, component of the NuA4 histone acetyltransferase complex, of the INO80 chromatin remodeling complex, and of the SWR1 chromatin remodeling complex.

The protein resides in the nucleus. Its function is as follows. Chromatin interaction component of the NuA4 histone acetyltransferase complex which is involved in transcriptional activation of selected genes principally by acetylation of nucleosomal histone H4 and H2A. The NuA4 complex is also involved in DNA repair. Is required for NuA4 complex integrity. Component of the SWR1 complex which mediates the ATP-dependent exchange of histone H2A for the H2A variant HZT1 leading to transcriptional regulation of selected genes by chromatin remodeling. Component of the INO80 complex which remodels chromatin by shifting nucleosomes and is involved in DNA repair. This Kluyveromyces lactis (strain ATCC 8585 / CBS 2359 / DSM 70799 / NBRC 1267 / NRRL Y-1140 / WM37) (Yeast) protein is Actin-related protein 4 (ARP4).